The following is a 119-amino-acid chain: Large ribosomal subunit protein bL20 (119 aa).

Belongs to the bacterial ribosomal protein bL20 family.

Functionally, binds directly to 23S ribosomal RNA and is necessary for the in vitro assembly process of the 50S ribosomal subunit. It is not involved in the protein synthesizing functions of that subunit. This Rhodopseudomonas palustris (strain BisA53) protein is Large ribosomal subunit protein bL20.